The following is a 208-amino-acid chain: Endo-1,4-beta-xylanase B (208 aa).

The N-terminal stretch at 1–16 is a signal peptide; sequence MKVTAAFAGLLATTLA. The GH11 domain maps to 17 to 207; sequence APATELVTRS…GTGTASVTVS (191 aa). E101 functions as the Nucleophile in the catalytic mechanism. The active-site Proton donor is E194.

It belongs to the glycosyl hydrolase 11 (cellulase G) family.

It is found in the secreted. The enzyme catalyses Endohydrolysis of (1-&gt;4)-beta-D-xylosidic linkages in xylans.. It participates in glycan degradation; xylan degradation. With respect to regulation, N-bromosuccinimide completely inhibits the catalytic activity. Functionally, endo-1,4-beta-xylanase involved in the hydrolysis of xylan, a major structural heterogeneous polysaccharide found in plant biomass representing the second most abundant polysaccharide in the biosphere, after cellulose. This Talaromyces purpureogenus (Soft rot fungus) protein is Endo-1,4-beta-xylanase B (xynB).